Reading from the N-terminus, the 370-residue chain is Putative transport protein YdiK (370 aa).

Topologically, residues 1 to 17 are periplasmic; sequence MVNVRQPRDVAQILLSV. A helical membrane pass occupies residues 18–38; that stretch reads LFLAIMIVACLWIVQPFILGF. Ala39 is a topological domain (cytoplasmic). Residues 40–60 form a helical membrane-spanning segment; sequence WAGTVVIATWPVLLRLQKIMF. The Periplasmic portion of the chain corresponds to 61-65; the sequence is GRRSL. A helical membrane pass occupies residues 66 to 86; sequence AVLVMTLLLVMVFIIPIALLV. Residues 87-106 are Cytoplasmic-facing; sequence NSIVDGSGPLIKAISSGDMT. A helical transmembrane segment spans residues 107 to 127; that stretch reads LPDLAWLNTIPVIGAKLYAGW. The Periplasmic segment spans residues 128–156; it reads HNLLDMGGTAIMAKVRPYIGTTTTWFVGQ. The helical transmembrane segment at 157–177 threads the bilayer; that stretch reads AAHIGRFMVHCALMLLFSALL. Residues 178-213 lie on the Cytoplasmic side of the membrane; it reads YWRGEQVAQGIRHFATRLAGVRGDAAVLLAAQAIRA. A helical membrane pass occupies residues 214–234; sequence VALGVVVTALVQAVLGGIGLA. Over 235-248 the chain is Periplasmic; it reads VSGVPYATLLTVLM. A helical transmembrane segment spans residues 249–269; it reads ILSCLVQLGPLPVLIPAIIWL. At 270 to 274 the chain is on the cytoplasmic side; sequence YWTGD. A helical transmembrane segment spans residues 275-295; sequence TTWGTVLLVWSGVVGTLDNVI. At 296–308 the chain is on the periplasmic side; it reads RPMLIRMGADLPL. Residues 309 to 329 traverse the membrane as a helical segment; sequence ILILSGVIGGLIAFGMIGLFI. The Cytoplasmic portion of the chain corresponds to 330-370; that stretch reads GPVLLAVSWRLFAAWVEEVPPPTDQPEEILEELGEIEKPNK.

This sequence belongs to the autoinducer-2 exporter (AI-2E) (TC 2.A.86) family.

Its subcellular location is the cell inner membrane. The protein is Putative transport protein YdiK (ydiK) of Escherichia coli (strain K12).